The following is a 447-amino-acid chain: Multidrug efflux pump SdrM (447 aa).

14 helical membrane passes run 6–26 (IITVIALILIMFMSAIESSII), 42–62 (LISLIFTAYFIALVIANPIVG), 70–90 (IIYVAIAGLLLFSIGSFMCGL), 94–114 (FTMLIISRVIQGFGSGVLMSL), 134–154 (IVGSVWGISSIIGPLLGGGIL), 161–181 (WLFYINIPIAIIAIILVIWTF), 194–214 (FDTKGLTLFYVFIGLIMFALL), 217–237 (QLLLLNFLSFILAIVVAMCLF), 260–280 (VFITDLLTAICLMGFNLYIPV), 286–306 (LGLSPLQSGLVIFPLSVAWIT), 323–342 (IYLLSFTLLLVSSIIISFGI), 346–363 (VLIAFVLILAGLSFGYIY), 392–412 (LGASIGSTIMGYLYAIQSGIF), and 418–438 (NVLSAVAVISIGLIVLWVVFF).

It belongs to the major facilitator superfamily.

It is found in the cell membrane. In terms of biological role, energy-dependent drug efflux pump that increases resistance to antimicrobial agents such as norfloxacin, acriflavine and ethidium bromide. The chain is Multidrug efflux pump SdrM from Staphylococcus aureus (strain N315).